Consider the following 137-residue polypeptide: Mediator of RNA polymerase II transcription subunit 21 (137 aa).

Positions 37-56 (PKDTIAPSKADQPPEVDTLP) are disordered. Residues 87–130 (GLDNSEQDQLQSIKELEEELNVAEKQRQEAVKEKDEVLVKLDQT) are a coiled coil.

It belongs to the Mediator complex subunit 21 family. As to quaternary structure, component of the Mediator complex.

The protein resides in the nucleus. Component of the Mediator complex, a coactivator involved in the regulated transcription of nearly all RNA polymerase II-dependent genes. Mediator functions as a bridge to convey information from gene-specific regulatory proteins to the basal RNA polymerase II transcription machinery. Mediator is recruited to promoters by direct interactions with regulatory proteins and serves as a scaffold for the assembly of a functional preinitiation complex with RNA polymerase II and the general transcription factors. The chain is Mediator of RNA polymerase II transcription subunit 21 (srb-7) from Neurospora crassa (strain ATCC 24698 / 74-OR23-1A / CBS 708.71 / DSM 1257 / FGSC 987).